The chain runs to 148 residues: Large ribosomal subunit protein uL15 (148 aa).

The disordered stretch occupies residues 18 to 38 (GYGRVGKHRKHPGGRGNAGGL).

This sequence belongs to the universal ribosomal protein uL15 family.

In Dictyostelium discoideum (Social amoeba), this protein is Large ribosomal subunit protein uL15 (rpl27a).